Consider the following 444-residue polypeptide: ATP-dependent protease ATPase subunit HslU (444 aa).

Residues Ile20 and 62-67 (GVGKTE) each bind ATP. The disordered stretch occupies residues 130-158 (EDRILDALVPPPRGASGEPERGEDNSARQ). Positions 257, 322, and 394 each coordinate ATP.

The protein belongs to the ClpX chaperone family. HslU subfamily. As to quaternary structure, a double ring-shaped homohexamer of HslV is capped on each side by a ring-shaped HslU homohexamer. The assembly of the HslU/HslV complex is dependent on binding of ATP.

The protein localises to the cytoplasm. In terms of biological role, ATPase subunit of a proteasome-like degradation complex; this subunit has chaperone activity. The binding of ATP and its subsequent hydrolysis by HslU are essential for unfolding of protein substrates subsequently hydrolyzed by HslV. HslU recognizes the N-terminal part of its protein substrates and unfolds these before they are guided to HslV for hydrolysis. This is ATP-dependent protease ATPase subunit HslU from Bordetella pertussis (strain Tohama I / ATCC BAA-589 / NCTC 13251).